The chain runs to 277 residues: Tumor necrosis factor receptor superfamily member 4 (277 aa).

An N-terminal signal peptide occupies residues 1-28 (MCVGARRLGRGPCAALLLLGLGLSTVTG). Residues 29 to 214 (LHCVGDTYPS…RPVEVPGGRA (186 aa)) are Extracellular-facing. TNFR-Cys repeat units lie at residues 30–65 (HCVGDTYPSNDRCCHECRPGNGMVSRCSRSQNTVCR) and 66–107 (PCGP…DTVC). 8 disulfide bridges follow: C31–C42, C43–C56, C46–C64, C67–C81, C84–C99, C87–C107, C109–C125, and C128–C141. One copy of the TNFR-Cys 3; truncated repeat lies at 108-126 (RCRAGTQPLDSYKPGVDCA). Residues 127 to 167 (PCPPGHFSPGDNQACKPWTNCTLAGKHTLQPASNSSDAICE) form a TNFR-Cys 4 repeat. N-linked (GlcNAc...) asparagine glycans are attached at residues N146 and N160. Residues C147 and C166 are joined by a disulfide bond. Residues 158–209 (ASNSSDAICEDRDPPATQPQETQGPPARPITVQPTEAWPRTSQGPSTRPVEV) are disordered. Residues 215–235 (VAAILGLGLVLGLLGPLAILL) form a helical membrane-spanning segment. At 236–277 (ALYLLRRDQRLPPDAHKPPGGGSFRTPIQEEQADAHSTLAKI) the chain is on the cytoplasmic side. A disordered region spans residues 248–277 (PDAHKPPGGGSFRTPIQEEQADAHSTLAKI).

Interacts with TRAF2, TRAF3 and TRAF5. In terms of assembly, (Microbial infection) Interacts with Human herpesvirus 6B/HHV-6B gQ1:gQ2 proteins.

The protein resides in the membrane. Its function is as follows. Receptor for TNFSF4/OX40L/GP34. Is a costimulatory molecule implicated in long-term T-cell immunity. Functionally, (Microbial infection) Acts as a receptor for human herpesvirus 6B/HHV-6B. This Homo sapiens (Human) protein is Tumor necrosis factor receptor superfamily member 4 (TNFRSF4).